Reading from the N-terminus, the 782-residue chain is Nucleolar RNA helicase 2 (782 aa).

A disordered region spans residues 1-184; that stretch reads MPGKLRSASK…IPVEQKEGAF (184 aa). Ser7 and Ser13 each carry phosphoserine. Basic and acidic residues-rich tracts occupy residues 26 to 42 and 99 to 117; these read PSEK…KTDE and EPLE…KAEE. N6-acetyllysine is present on Lys39. Residue Lys114 forms a Glycyl lysine isopeptide (Lys-Gly) (interchain with G-Cter in SUMO1); alternate linkage. A Glycyl lysine isopeptide (Lys-Gly) (interchain with G-Cter in SUMO2); alternate cross-link involves residue Lys114. Ser119 is subject to Phosphoserine. The segment covering 134 to 143 has biased composition (basic and acidic residues); that stretch reads GKEANGDVGE. The residue at position 135 (Lys135) is an N6-acetyllysine. Ser145 and Ser169 each carry phosphoserine. A compositionally biased stretch (basic and acidic residues) spans 172–181; that stretch reads EKEIPVEQKE. The Q motif signature appears at 182–210; that stretch reads GAFSNFPISEETVKLLKARGVNFLFPIQA. The Helicase ATP-binding domain occupies 213–392; it reads FHHVYSGKDL…KKYMKSTYEQ (180 aa). Position 226 to 233 (226 to 233) interacts with ATP; sequence ARTGTGKT. The residue at position 292 (Thr292) is a Phosphothreonine. Residues 335 to 338 carry the DEAD box motif; the sequence is DEVD. One can recognise a Helicase C-terminal domain in the interval 425–569; it reads DVIRVYSGHQ…GVPSATEIIK (145 aa). Ser563 bears the Phosphoserine mark. N6-acetyllysine is present on Lys596. Positions 704–782 are disordered; it reads ATEQPELEGP…KRSFSKAFGQ (79 aa). 3 repeat units span residues 720-724, 731-735, and 741-747. A 3 X 5 AA repeats region spans residues 720–747; it reads GRGQRDGSRGSFRGQRGGSRNFRGQGQR. The span at 728–756 shows a compositional bias: low complexity; it reads RGSFRGQRGGSRNFRGQGQRGGSRNFRGQ. Lys778 is subject to N6-acetyllysine.

It belongs to the DEAD box helicase family. DDX21/DDX50 subfamily. In terms of assembly, homodimer; homodimerizes via its N-terminus. Found in a multi-helicase-TICAM1 complex at least composed of DHX36, DDX1, DDX21 and TICAM1; this complex exists in resting cells with or without poly(I:C) RNA ligand stimulation. Interacts (via C-terminus) with TICAM1 (via TIR domain). Interacts with DHX36 (via C-terminus); this interaction serves as bridges to TICAM1. Interacts (via C-terminus) with DDX1 (via B30.2/SPRY domain); this interaction serves as bridges to TICAM1. Component of the B-WICH complex, at least composed of SMARCA5/SNF2H, BAZ1B/WSTF, SF3B1, DEK, MYO1C, ERCC6, MYBBP1A and DDX21. Interacts with C1QBP. Interacts with JUN. Interacts with WDR46. Interacts with MCM3AP. Interacts with WDR43. Interacts with KPNA3. Interacts with GID4. Post-translationally, acetylation by CREBBP/CBP inhibits the helicase activity. Deacetylation by SIRT7 promotes the helicase activity and overcomes R-loop-mediated stalling of RNA polymerases.

Its subcellular location is the nucleus. It localises to the nucleolus. It is found in the nucleoplasm. The protein localises to the cytoplasm. The protein resides in the cytosol. Its subcellular location is the mitochondrion. It carries out the reaction ATP + H2O = ADP + phosphate + H(+). Its activity is regulated as follows. Acetylation inhibits the helicase activity. Functionally, RNA helicase that acts as a sensor of the transcriptional status of both RNA polymerase (Pol) I and II: promotes ribosomal RNA (rRNA) processing and transcription from polymerase II (Pol II). Binds various RNAs, such as rRNAs, snoRNAs, 7SK and, at lower extent, mRNAs. In the nucleolus, localizes to rDNA locus, where it directly binds rRNAs and snoRNAs, and promotes rRNA transcription, processing and modification. Required for rRNA 2'-O-methylation, possibly by promoting the recruitment of late-acting snoRNAs SNORD56 and SNORD58 with pre-ribosomal complexes. In the nucleoplasm, binds 7SK RNA and is recruited to the promoters of Pol II-transcribed genes: acts by facilitating the release of P-TEFb from inhibitory 7SK snRNP in a manner that is dependent on its helicase activity, thereby promoting transcription of its target genes. Functions as a cofactor for JUN-activated transcription: required for phosphorylation of JUN at 'Ser-77'. Can unwind double-stranded RNA (helicase) and can fold or introduce a secondary structure to a single-stranded RNA (foldase). Together with SIRT7, required to prevent R-loop-associated DNA damage and transcription-associated genomic instability: deacetylation by SIRT7 activates the helicase activity, thereby overcoming R-loop-mediated stalling of RNA polymerases. Involved in rRNA processing. May bind to specific miRNA hairpins. Component of a multi-helicase-TICAM1 complex that acts as a cytoplasmic sensor of viral double-stranded RNA (dsRNA) and plays a role in the activation of a cascade of antiviral responses including the induction of pro-inflammatory cytokines via the adapter molecule TICAM1. This Rattus norvegicus (Rat) protein is Nucleolar RNA helicase 2 (Ddx21).